Here is a 156-residue protein sequence, read N- to C-terminus: MENRERAGAGAVGSAGSLGLRVEQAVFSSASLLFMSVGVEFFSYTAFCFLVTIMGLVIPWSCTLAMIDVYSILVGCPLRVPGVMVIVVIGDWVLAILSLAAASSSAAVIDLLLQFHGSHCSPRFCGRYQLSAMMAFLSWFLTAASSLFNLWFIASR.

Residues 1–24 (MENRERAGAGAVGSAGSLGLRVEQ) are Cytoplasmic-facing. Residues 25–45 (AVFSSASLLFMSVGVEFFSYT) traverse the membrane as a helical segment. Ala-46 is a topological domain (extracellular). Residues 47–67 (FCFLVTIMGLVIPWSCTLAMI) traverse the membrane as a helical segment. The Cytoplasmic portion of the chain corresponds to 68–81 (DVYSILVGCPLRVP). Residues 82 to 102 (GVMVIVVIGDWVLAILSLAAA) traverse the membrane as a helical segment. The Extracellular portion of the chain corresponds to 103 to 132 (SSSAAVIDLLLQFHGSHCSPRFCGRYQLSA). A helical membrane pass occupies residues 133-153 (MMAFLSWFLTAASSLFNLWFI). Residues 154 to 156 (ASR) lie on the Cytoplasmic side of the membrane.

It belongs to the Casparian strip membrane proteins (CASP) family. As to quaternary structure, homodimer and heterodimers.

It is found in the cell membrane. This chain is CASP-like protein 5C1, found in Oryza sativa subsp. indica (Rice).